Consider the following 631-residue polypeptide: MTHEFTENYDVIVIGAGHAGVEASLATSRMGCKTLLATINLEMLAFMPCNPSIGGSAKGIVVREIDALGGEMGKNIDKSYIQMRMLNTGKGPAVRALRAQADKALYARNMKHTVEQQENLTLRQSMIDEILVEDGKVIGVRTATNQKYSAQAVIVTTGTALRGEIILGELKYSSGPNNSLASVTLADNLRDLGLEIGRFKTGTPPRVKANSIHYDETEIQPGDKKANHFSFMSKDEDYLKDQIPCWLTYTNQSSHDIINKNLYRAPMFSGIVKGVGPRYCPSIEDKIVRFADKDRHQLFLEPEGRETEEVYIQGLSTSLPEDVQKDVVHSIKGLENAEMMRTGYAIEYDIVLPHQLRATLETKKISGLFTAGQTNGTSGYEEAAGQGIVAGINAALKIQGKPELILKRSDAYIGVMIDDLVTKGTLEPYRLLTSRAEYRLILRHDNADLRLTEIGHQVGLVNEERYMRFQIRKNQFDNELTRLSSIKLKPVAEINKRIEELGFKPLTDALTAKEFMRRPEINYAIATSFVGPAAESLDEKVIELLETEIKYEGYINKALDQVAKMKRMEEKRIPKNIDWDAIDSIATEARQKFKKINPETIGQASRISGVNPADISILMVYLEGKNRSRTR.

FAD is bound by residues 15–20 (GAGHAG), Ile127, and Ser182. 276–290 (GPRYCPSIEDKIVRF) lines the NAD(+) pocket. Position 373 (Gln373) interacts with FAD.

This sequence belongs to the MnmG family. As to quaternary structure, homodimer. Heterotetramer of two MnmE and two MnmG subunits. It depends on FAD as a cofactor.

It is found in the cytoplasm. Its function is as follows. NAD-binding protein involved in the addition of a carboxymethylaminomethyl (cmnm) group at the wobble position (U34) of certain tRNAs, forming tRNA-cmnm(5)s(2)U34. This Streptococcus mutans serotype c (strain ATCC 700610 / UA159) protein is tRNA uridine 5-carboxymethylaminomethyl modification enzyme MnmG.